The sequence spans 85 residues: RNA-binding protein Hfq (85 aa).

The region spanning 11 to 71 is the Sm domain; it reads DTFLNHVRKS…ISTIMPGHPV (61 aa).

It belongs to the Hfq family. In terms of assembly, homohexamer.

In terms of biological role, RNA chaperone that binds small regulatory RNA (sRNAs) and mRNAs to facilitate mRNA translational regulation in response to envelope stress, environmental stress and changes in metabolite concentrations. Also binds with high specificity to tRNAs. Seems to be involved in the regulation of NifA. The chain is RNA-binding protein Hfq from Azorhizobium caulinodans (strain ATCC 43989 / DSM 5975 / JCM 20966 / LMG 6465 / NBRC 14845 / NCIMB 13405 / ORS 571).